Consider the following 199-residue polypeptide: ATP-dependent Clp protease proteolytic subunit 2 (199 aa).

Ser98 (nucleophile) is an active-site residue. Residue His123 is part of the active site.

This sequence belongs to the peptidase S14 family. In terms of assembly, fourteen ClpP subunits assemble into 2 heptameric rings which stack back to back to give a disk-like structure with a central cavity, resembling the structure of eukaryotic proteasomes.

Its subcellular location is the cytoplasm. The enzyme catalyses Hydrolysis of proteins to small peptides in the presence of ATP and magnesium. alpha-casein is the usual test substrate. In the absence of ATP, only oligopeptides shorter than five residues are hydrolyzed (such as succinyl-Leu-Tyr-|-NHMec, and Leu-Tyr-Leu-|-Tyr-Trp, in which cleavage of the -Tyr-|-Leu- and -Tyr-|-Trp bonds also occurs).. In terms of biological role, cleaves peptides in various proteins in a process that requires ATP hydrolysis. Has a chymotrypsin-like activity. Plays a major role in the degradation of misfolded proteins. The chain is ATP-dependent Clp protease proteolytic subunit 2 from Treponema pallidum (strain Nichols).